Here is a 113-residue protein sequence, read N- to C-terminus: Large ribosomal subunit protein uL22 (113 aa).

Belongs to the universal ribosomal protein uL22 family. In terms of assembly, part of the 50S ribosomal subunit.

Its function is as follows. This protein binds specifically to 23S rRNA; its binding is stimulated by other ribosomal proteins, e.g. L4, L17, and L20. It is important during the early stages of 50S assembly. It makes multiple contacts with different domains of the 23S rRNA in the assembled 50S subunit and ribosome. Functionally, the globular domain of the protein is located near the polypeptide exit tunnel on the outside of the subunit, while an extended beta-hairpin is found that lines the wall of the exit tunnel in the center of the 70S ribosome. The chain is Large ribosomal subunit protein uL22 from Symbiobacterium thermophilum (strain DSM 24528 / JCM 14929 / IAM 14863 / T).